Here is a 186-residue protein sequence, read N- to C-terminus: Guanylate kinase (186 aa).

A Guanylate kinase-like domain is found at 5–183 (GNLTVLTGPS…AFKEIEGFMG (179 aa)). Residue 12–19 (GPSGVGKG) participates in ATP binding.

Belongs to the guanylate kinase family.

The protein localises to the cytoplasm. The catalysed reaction is GMP + ATP = GDP + ADP. In terms of biological role, essential for recycling GMP and indirectly, cGMP. The chain is Guanylate kinase from Prochlorococcus marinus (strain NATL2A).